A 211-amino-acid polypeptide reads, in one-letter code: Large ribosomal subunit protein uL4 (211 aa).

Residues 41–53 show a composition bias toward polar residues; sequence QAHSRQGTASTLT. Residues 41 to 85 form a disordered region; the sequence is QAHSRQGTASTLTRAEVRGGGRKPYKQKGTGRARQGSIRTPLRPG. Over residues 60–71 the composition is skewed to basic residues; the sequence is GGRKPYKQKGTG.

This sequence belongs to the universal ribosomal protein uL4 family. Part of the 50S ribosomal subunit.

One of the primary rRNA binding proteins, this protein initially binds near the 5'-end of the 23S rRNA. It is important during the early stages of 50S assembly. It makes multiple contacts with different domains of the 23S rRNA in the assembled 50S subunit and ribosome. Its function is as follows. Forms part of the polypeptide exit tunnel. This is Large ribosomal subunit protein uL4 from Prochlorococcus marinus (strain SARG / CCMP1375 / SS120).